Reading from the N-terminus, the 208-residue chain is Imidazoleglycerol-phosphate dehydratase (208 aa).

It belongs to the imidazoleglycerol-phosphate dehydratase family.

Its subcellular location is the cytoplasm. The catalysed reaction is D-erythro-1-(imidazol-4-yl)glycerol 3-phosphate = 3-(imidazol-4-yl)-2-oxopropyl phosphate + H2O. It participates in amino-acid biosynthesis; L-histidine biosynthesis; L-histidine from 5-phospho-alpha-D-ribose 1-diphosphate: step 6/9. In Arthrobacter sp. (strain FB24), this protein is Imidazoleglycerol-phosphate dehydratase.